The chain runs to 784 residues: MASTRSIELEHFEERDKRPRPGSRRGAPSSSGGSSSSGPKGNGLIPSPAHSAHCSFYRTRTLQALSSEKKAKKARFYRNGDRYFKGLVFAISSDRFRSFDALLMELTRSLSDNVNLPQGVRTIYTIDGSRKVTSLDELLEGESYVCASNEPFRKVDYTKNINPNWSVNIKGGTARALAAPSSVKSEVKESKDFIKPKLVTVIRSGVKPRKAVRILLNKKTAHSFEQVLTDITEAIKLDSGVVKRLCTLDGKQVTCLQDFFGDDDVFIACGPEKFRYAQDDFVLDHSECRVLKSSYSRSSAVKYSGSKSPGPSRRSKSPASVKRGGHHASAYSAARSPVNGTPSSQLSTPKSTKSSSSSPTSPGSFRGLKQISAHGRSSSNVNGGPELARCLSPEGVNGNRCSESSTLLEKYKIGKVIGDGNFAVVKECMDRSTGKEFALKIIDKAKCCGKEHLIENEVSILRRVKHPNIIMLVEEMETATELFLVMELVKGGDLFDAITSSTKYTERDGSAMVYNLANALRYLHGLSIVHRDIKPENLLVCEYPDGTKSLKLGDFGLATVVEGPLYTVCGTPTYVAPEIIAETGYGLKVDIWAAGVITYILLCGFPPFRSENNLQEDLFDQILAGKLEFPAPYWDNITDSAKELISQMLQVNVEARCTAGEILSHPWVSDDASQENNMQAEVTGKLKQHFNNALPKQNSTTTGVSVIMNTALDKEGQIFCSKHCQDSSRPGMELTSPVPPSASAEEPPVSAPAAAPAPLESPTPPGTPAASGCERAGTWRRHRD.

The tract at residues 1 to 45 (MASTRSIELEHFEERDKRPRPGSRRGAPSSSGGSSSSGPKGNGLI) is disordered. Positions 7 to 19 (IELEHFEERDKRP) are enriched in basic and acidic residues. Residues 24–39 (RRGAPSSSGGSSSSGP) are compositionally biased toward low complexity. Thr61 is modified (phosphothreonine). 2 Doublecortin domains span residues 72–158 (KKAR…VDYT) and 197–280 (KLVT…AQDD). Composition is skewed to low complexity over residues 300–312 (AVKYSGSKSPGPS) and 341–364 (TPSSQLSTPKSTKSSSSSPTSPGS). A disordered region spans residues 300–368 (AVKYSGSKSP…PTSPGSFRGL (69 aa)). Ser379 bears the Phosphoserine mark. A Protein kinase domain is found at 411–668 (YKIGKVIGDG…AGEILSHPWV (258 aa)). ATP contacts are provided by residues 417–425 (IGDGNFAVV) and Lys440. Residue Asp532 is the Proton acceptor of the active site. The residue at position 664 (Ser664) is a Phosphoserine. Position 683 is a phosphothreonine (Thr683). The disordered stretch occupies residues 724–784 (CQDSSRPGME…RAGTWRRHRD (61 aa)). The span at 741–758 (SASAEEPPVSAPAAAPAP) shows a compositional bias: low complexity.

This sequence belongs to the protein kinase superfamily. CAMK Ser/Thr protein kinase family. CaMK subfamily. In terms of assembly, binds to and stabilizes microtubules. Interacts with MAPK8IP1/JIP-1, MAPK8IP2/JIP-2, MAPK9/JNK2, PPP1R9B/NEURABIN-2 and actin. Post-translationally, autophosphorylated.

It localises to the cytoplasm. The protein resides in the cytoskeleton. It catalyses the reaction L-seryl-[protein] + ATP = O-phospho-L-seryl-[protein] + ADP + H(+). The catalysed reaction is L-threonyl-[protein] + ATP = O-phospho-L-threonyl-[protein] + ADP + H(+). Functionally, protein kinase with a significantly reduced Ca(2+)/CAM affinity and dependence compared to other members of the CaMK family. May play a role in the down-regulation of CRE-dependent gene activation probably by phosphorylation of the CREB coactivator CRTC2/TORC2 and the resulting retention of TORC2 in the cytoplasm. This is Serine/threonine-protein kinase DCLK2 (DCLK2) from Ailuropoda melanoleuca (Giant panda).